Consider the following 745-residue polypeptide: Photosystem I P700 chlorophyll a apoprotein A2 (745 aa).

Helical transmembrane passes span 49–72 (LFAT…FHIA), 138–161 (LYAG…LHLQ), 178–202 (LNHH…HVAI), 276–294 (MAHH…GHMY), 338–361 (LHFQ…QHMY), 377–403 (AALY…IFLV), 425–447 (AIIS…LYVH), and 528–546 (FLVH…LILV). Residues Cys570 and Cys579 each contribute to the [4Fe-4S] cluster site. 2 helical membrane passes run 586–607 (AFYL…YWHW) and 654–676 (LAVW…MFLI). Residues His665, Met673, and Tyr681 each contribute to the chlorophyll a site. Trp682 contacts phylloquinone. Residues 718-738 (LVGLAHFTVGYVLTYAAFVIA) traverse the membrane as a helical segment.

This sequence belongs to the PsaA/PsaB family. The PsaA/B heterodimer binds the P700 chlorophyll special pair and subsequent electron acceptors. PSI consists of a core antenna complex that captures photons, and an electron transfer chain that converts photonic excitation into a charge separation. The cyanobacterial PSI reaction center is composed of one copy each of PsaA,B,C,D,E,F,I,J,K,L,M and X, and forms trimeric complexes. It depends on PSI electron transfer chain: 5 chlorophyll a, 1 chlorophyll a', 2 phylloquinones and 3 4Fe-4S clusters. PSI core antenna: 90 chlorophyll a, 22 carotenoids, 3 phospholipids and 1 galactolipid. P700 is a chlorophyll a/chlorophyll a' dimer, A0 is one or more chlorophyll a, A1 is one or both phylloquinones and FX is a shared 4Fe-4S iron-sulfur center. as a cofactor.

It is found in the cellular thylakoid membrane. It carries out the reaction reduced [plastocyanin] + hnu + oxidized [2Fe-2S]-[ferredoxin] = oxidized [plastocyanin] + reduced [2Fe-2S]-[ferredoxin]. In terms of biological role, psaA and PsaB bind P700, the primary electron donor of photosystem I (PSI), as well as the electron acceptors A0, A1 and FX. PSI is a plastocyanin/cytochrome c6-ferredoxin oxidoreductase, converting photonic excitation into a charge separation, which transfers an electron from the donor P700 chlorophyll pair to the spectroscopically characterized acceptors A0, A1, FX, FA and FB in turn. Oxidized P700 is reduced on the lumenal side of the thylakoid membrane by plastocyanin or cytochrome c6. In Synechococcus sp. (strain JA-3-3Ab) (Cyanobacteria bacterium Yellowstone A-Prime), this protein is Photosystem I P700 chlorophyll a apoprotein A2.